The sequence spans 206 residues: MLLCDIGNTFLHFYHKGRIWKEKPYALTKKKENLPIYYISVNERFERCLLASHPHCVNVNEHIELQTQYVGLGVDRKAACRAIDNGVIIDAGSAITADVMQEGVHIGGYIMPGLEAYRRMYSDISPVLNREIEPGVNLSILPQNTADAISFGVLKSVILMIKNTSRTKKLYFTGGDGKFFARFFENAIYDNTLVFKGMQKVLEKQI.

5–12 (DIGNTFLH) lines the ATP pocket. Substrate contacts are provided by residues Tyr69 and 73-76 (GVDR). The Proton acceptor role is filled by Asp75. Asp90 is a K(+) binding site. An ATP-binding site is contributed by Ser93. Residue Thr145 participates in substrate binding.

This sequence belongs to the type III pantothenate kinase family. Homodimer. The cofactor is NH4(+). It depends on K(+) as a cofactor.

The protein localises to the cytoplasm. It carries out the reaction (R)-pantothenate + ATP = (R)-4'-phosphopantothenate + ADP + H(+). It functions in the pathway cofactor biosynthesis; coenzyme A biosynthesis; CoA from (R)-pantothenate: step 1/5. Catalyzes the phosphorylation of pantothenate (Pan), the first step in CoA biosynthesis. The protein is Type III pantothenate kinase of Helicobacter hepaticus (strain ATCC 51449 / 3B1).